Here is a 68-residue protein sequence, read N- to C-terminus: ATP synthase F(0) complex subunit 8 (68 aa).

A helical transmembrane segment spans residues 8 to 24 (TWSITIVSMIITLFIMF). Residue K54 is modified to N6-acetyllysine; alternate. Position 54 is an N6-succinyllysine; alternate (K54). K57 is modified (N6-acetyllysine).

The protein belongs to the ATPase protein 8 family. As to quaternary structure, component of the ATP synthase complex composed at least of ATP5F1A/subunit alpha, ATP5F1B/subunit beta, ATP5MC1/subunit c (homooctomer), MT-ATP6/subunit a, MT-ATP8/subunit 8, ATP5ME/subunit e, ATP5MF/subunit f, ATP5MG/subunit g, ATP5MK/subunit k, ATP5MJ/subunit j, ATP5F1C/subunit gamma, ATP5F1D/subunit delta, ATP5F1E/subunit epsilon, ATP5PF/subunit F6, ATP5PB/subunit b, ATP5PD/subunit d, ATP5PO/subunit OSCP. ATP synthase complex consists of a soluble F(1) head domain (subunits alpha(3) and beta(3)) - the catalytic core - and a membrane F(0) domain - the membrane proton channel (subunits c, a, 8, e, f, g, k and j). These two domains are linked by a central stalk (subunits gamma, delta, and epsilon) rotating inside the F1 region and a stationary peripheral stalk (subunits F6, b, d, and OSCP). Interacts with PRICKLE3.

The protein localises to the mitochondrion membrane. In terms of biological role, subunit 8, of the mitochondrial membrane ATP synthase complex (F(1)F(0) ATP synthase or Complex V) that produces ATP from ADP in the presence of a proton gradient across the membrane which is generated by electron transport complexes of the respiratory chain. ATP synthase complex consist of a soluble F(1) head domain - the catalytic core - and a membrane F(1) domain - the membrane proton channel. These two domains are linked by a central stalk rotating inside the F(1) region and a stationary peripheral stalk. During catalysis, ATP synthesis in the catalytic domain of F(1) is coupled via a rotary mechanism of the central stalk subunits to proton translocation. In vivo, can only synthesize ATP although its ATP hydrolase activity can be activated artificially in vitro. Part of the complex F(0) domain. This chain is ATP synthase F(0) complex subunit 8, found in Ceratotherium simum (White rhinoceros).